The chain runs to 543 residues: Probable protein kinase UbiB (543 aa).

Residues 123 to 500 (DFDQQPLASA…HRRHAQARFL (378 aa)) form the Protein kinase domain. Residues 129-137 (LASASVAQV) and Lys152 each bind ATP. Catalysis depends on Asp286, which acts as the Proton acceptor. 2 helical membrane passes run 499–519 (FLLGAGATLLLGSILLLPTHE) and 521–541 (LASAGLTISIICWLNGWWKIS).

The protein belongs to the ABC1 family. UbiB subfamily.

Its subcellular location is the cell inner membrane. The protein operates within cofactor biosynthesis; ubiquinone biosynthesis [regulation]. Its function is as follows. Is probably a protein kinase regulator of UbiI activity which is involved in aerobic coenzyme Q (ubiquinone) biosynthesis. The sequence is that of Probable protein kinase UbiB from Tolumonas auensis (strain DSM 9187 / NBRC 110442 / TA 4).